Here is a 208-residue protein sequence, read N- to C-terminus: Uracil phosphoribosyltransferase (208 aa).

5-phospho-alpha-D-ribose 1-diphosphate is bound by residues R78, R103, and 130-138 (DPMLATGGS). Residues I193 and 198 to 200 (GDA) each bind uracil. D199 lines the 5-phospho-alpha-D-ribose 1-diphosphate pocket.

It belongs to the UPRTase family. Mg(2+) serves as cofactor.

It catalyses the reaction UMP + diphosphate = 5-phospho-alpha-D-ribose 1-diphosphate + uracil. Its pathway is pyrimidine metabolism; UMP biosynthesis via salvage pathway; UMP from uracil: step 1/1. With respect to regulation, allosterically activated by GTP. Its function is as follows. Catalyzes the conversion of uracil and 5-phospho-alpha-D-ribose 1-diphosphate (PRPP) to UMP and diphosphate. The polypeptide is Uracil phosphoribosyltransferase (Sodalis glossinidius (strain morsitans)).